The chain runs to 120 residues: Small ribosomal subunit protein eS24 (120 aa).

A disordered region spans residues Arg101–Gly120.

The protein belongs to the eukaryotic ribosomal protein eS24 family.

The polypeptide is Small ribosomal subunit protein eS24 (Saccharolobus solfataricus (strain ATCC 35092 / DSM 1617 / JCM 11322 / P2) (Sulfolobus solfataricus)).